The chain runs to 187 residues: Ras-like protein rasD (187 aa).

GTP is bound at residue 10 to 17; sequence GGGGVGKS. The Effector region signature appears at 32–40; it reads YDPTIEDSY. GTP contacts are provided by residues 57-61 and 116-119; these read DTAGQ and NKAD. Cysteine methyl ester is present on cysteine 184. Cysteine 184 is lipidated: S-geranylgeranyl cysteine. The propeptide at 185 to 187 is removed in mature form; the sequence is LIL.

It belongs to the small GTPase superfamily. Ras family.

Its subcellular location is the cell membrane. It catalyses the reaction GTP + H2O = GDP + phosphate + H(+). With respect to regulation, alternates between an inactive form bound to GDP and an active form bound to GTP. Activated by a guanine nucleotide-exchange factor (GEF) and inactivated by a GTPase-activating protein (GAP). Its function is as follows. Ras proteins bind GDP/GTP and possess intrinsic GTPase activity. This Dictyostelium discoideum (Social amoeba) protein is Ras-like protein rasD (rasD).